The primary structure comprises 402 residues: Flavohemoprotein (402 aa).

Residues 1–136 form the Globin domain; that stretch reads MLSEKTIEIV…IADAFISIEA (136 aa). His85 provides a ligand contact to heme b. Residues Tyr95 and Glu135 each act as charge relay system in the active site. A reductase region spans residues 147–402; that stretch reads GGWKDFRNFV…EFFGPAASLQ (256 aa). Residues 150–260 form the FAD-binding FR-type domain; sequence KDFRNFVVVK…SAPAGDFVLN (111 aa). FAD-binding positions include Tyr188 and 204–207; that span reads RQYS. An NADP(+)-binding site is contributed by 273 to 278; it reads GVGITP. 394–397 contributes to the FAD binding site; sequence FFGP.

Belongs to the globin family. Two-domain flavohemoproteins subfamily. This sequence in the C-terminal section; belongs to the flavoprotein pyridine nucleotide cytochrome reductase family. The cofactor is heme b. FAD serves as cofactor.

It catalyses the reaction 2 nitric oxide + NADPH + 2 O2 = 2 nitrate + NADP(+) + H(+). The enzyme catalyses 2 nitric oxide + NADH + 2 O2 = 2 nitrate + NAD(+) + H(+). Its function is as follows. Is involved in NO detoxification in an aerobic process, termed nitric oxide dioxygenase (NOD) reaction that utilizes O(2) and NAD(P)H to convert NO to nitrate, which protects the bacterium from various noxious nitrogen compounds. Therefore, plays a central role in the inducible response to nitrosative stress. The polypeptide is Flavohemoprotein (Bacillus anthracis).